The chain runs to 369 residues: Glutamate 5-kinase (369 aa).

Lys-9 serves as a coordination point for ATP. Substrate contacts are provided by Ser-49, Asp-136, and Asn-148. ATP contacts are provided by residues 168–169 (TD) and 210–216 (TGGMLTK). The region spanning 275-355 (QGSIWVDKGA…KGVLIYRDDW (81 aa)) is the PUA domain.

The protein belongs to the glutamate 5-kinase family.

It localises to the cytoplasm. The catalysed reaction is L-glutamate + ATP = L-glutamyl 5-phosphate + ADP. It participates in amino-acid biosynthesis; L-proline biosynthesis; L-glutamate 5-semialdehyde from L-glutamate: step 1/2. Functionally, catalyzes the transfer of a phosphate group to glutamate to form L-glutamate 5-phosphate. This chain is Glutamate 5-kinase, found in Streptococcus pneumoniae serotype 2 (strain D39 / NCTC 7466).